A 413-amino-acid chain; its full sequence is Cardiolipin synthase B (413 aa).

PLD phosphodiesterase domains are found at residues 108–135 and 285–312; these read VFRR…SAEH and RRRP…DPLS. Active-site residues include H113, K115, D120, H290, K292, and D297. The disordered stretch occupies residues 390–413; the sequence is VDPPAQPTMETQDRVETENTGVKP.

It belongs to the phospholipase D family. Cardiolipin synthase subfamily. ClsB sub-subfamily.

Its subcellular location is the cell membrane. It carries out the reaction 2 a 1,2-diacyl-sn-glycero-3-phospho-(1'-sn-glycerol) = a cardiolipin + glycerol. In terms of biological role, catalyzes the phosphatidyl group transfer from one phosphatidylglycerol molecule to another to form cardiolipin (CL) (diphosphatidylglycerol) and glycerol. The polypeptide is Cardiolipin synthase B (Escherichia coli O157:H7).